A 385-amino-acid chain; its full sequence is Probable tRNA sulfurtransferase (385 aa).

A THUMP domain is found at 65 to 165 (AILQELFSFL…KEHFLVFTER (101 aa)). ATP contacts are provided by residues 183 to 184 (LL), 208 to 209 (TF), Arg267, Gly285, and Gln294.

Belongs to the ThiI family.

Its subcellular location is the cytoplasm. The catalysed reaction is [ThiI sulfur-carrier protein]-S-sulfanyl-L-cysteine + a uridine in tRNA + 2 reduced [2Fe-2S]-[ferredoxin] + ATP + H(+) = [ThiI sulfur-carrier protein]-L-cysteine + a 4-thiouridine in tRNA + 2 oxidized [2Fe-2S]-[ferredoxin] + AMP + diphosphate. It carries out the reaction [ThiS sulfur-carrier protein]-C-terminal Gly-Gly-AMP + S-sulfanyl-L-cysteinyl-[cysteine desulfurase] + AH2 = [ThiS sulfur-carrier protein]-C-terminal-Gly-aminoethanethioate + L-cysteinyl-[cysteine desulfurase] + A + AMP + 2 H(+). Its pathway is cofactor biosynthesis; thiamine diphosphate biosynthesis. Catalyzes the ATP-dependent transfer of a sulfur to tRNA to produce 4-thiouridine in position 8 of tRNAs, which functions as a near-UV photosensor. Also catalyzes the transfer of sulfur to the sulfur carrier protein ThiS, forming ThiS-thiocarboxylate. This is a step in the synthesis of thiazole, in the thiamine biosynthesis pathway. The sulfur is donated as persulfide by IscS. The polypeptide is Probable tRNA sulfurtransferase (Mycoplasma genitalium (strain ATCC 33530 / DSM 19775 / NCTC 10195 / G37) (Mycoplasmoides genitalium)).